The following is a 416-amino-acid chain: UDP-N-acetylglucosamine 1-carboxyvinyltransferase (416 aa).

Residue lysine 22–asparagine 23 coordinates phosphoenolpyruvate. A UDP-N-acetyl-alpha-D-glucosamine-binding site is contributed by arginine 91. Cysteine 115 acts as the Proton donor in catalysis. Cysteine 115 is modified (2-(S-cysteinyl)pyruvic acid O-phosphothioketal). UDP-N-acetyl-alpha-D-glucosamine is bound by residues arginine 120–leucine 124, aspartate 305, and isoleucine 327.

This sequence belongs to the EPSP synthase family. MurA subfamily.

It is found in the cytoplasm. The enzyme catalyses phosphoenolpyruvate + UDP-N-acetyl-alpha-D-glucosamine = UDP-N-acetyl-3-O-(1-carboxyvinyl)-alpha-D-glucosamine + phosphate. Its pathway is cell wall biogenesis; peptidoglycan biosynthesis. Its function is as follows. Cell wall formation. Adds enolpyruvyl to UDP-N-acetylglucosamine. The polypeptide is UDP-N-acetylglucosamine 1-carboxyvinyltransferase (Buchnera aphidicola subsp. Acyrthosiphon pisum (strain 5A)).